The following is a 1581-amino-acid chain: Ankyrin repeat domain-containing protein 26 (1581 aa).

Residues 1 to 22 are disordered; it reads MKKIFGFRSKGPSPLGPSARPR. Serine 13 bears the Phosphoserine mark. ANK repeat units lie at residues 46-76, 80-109, 113-142, 146-175, and 179-208; these read KDMG…GVND, KDRT…EIDA, ESST…DPNV, SGNT…NIEA, and DDLT…SIHA. Disordered stretches follow at residues 225-270, 299-343, 361-381, and 488-652; these read RLQR…FDNK, LDNG…PVEG, SASQ…WHKS, and VLNK…QTAA. The segment covering 229–250 has biased composition (polar residues); sequence SENSNPVDNGSEDGSLTRSYNT. Residues serine 239 and serine 260 each carry the phosphoserine modification. Residues 308–319 show a composition bias toward acidic residues; sequence SDSPSESEDAIE. Over residues 327-337 the composition is skewed to polar residues; the sequence is RVQTLSPSRQS. Residues 367–381 are compositionally biased toward basic and acidic residues; that stretch reads PNHDNLTRADGWHKS. Polar residues predominate over residues 491 to 504; sequence KTETVGMTDAQTFK. Composition is skewed to basic and acidic residues over residues 505–516, 524–538, and 585–601; these read SEPESVSREEQT, SQQK…KNNE, and KEAK…REPA. Phosphoserine is present on serine 511. 4 coiled-coil regions span residues 715 to 845, 876 to 1345, 1396 to 1470, and 1521 to 1550; these read RSHC…NARM, HEKE…MVEH, RSQM…RSLL, and LTKM…FCRV.

Interacts with TRIO. Interacts with GPS2. Interacts with CCDC85B. Interacts with HMMR. As to expression, widely expressed. Expressed in the arcuate and ventromedial nuclei within the hypothalamus and in the ependyma and the circumventricular organs (at protein level).

Its subcellular location is the cytoplasm. It localises to the cytosol. Acts as a regulator of adipogenesis. Involved in the regulation of the feeding behavior. This Mus musculus (Mouse) protein is Ankyrin repeat domain-containing protein 26 (Ankrd26).